The chain runs to 222 residues: Kunitz trypsin inhibitor 3 (222 aa).

The signal sequence occupies residues 1–23 (MEKLTLSFITLTVLSAIFTAASA). An N-linked (GlcNAc...) asparagine glycan is attached at N65. 2 cysteine pairs are disulfide-bonded: C72–C119 and C165–C173. Residue N175 is glycosylated (N-linked (GlcNAc...) asparagine).

The protein belongs to the protease inhibitor I3 (leguminous Kunitz-type inhibitor) family.

Exhibits Kunitz trypsin protease inhibitor activity. The chain is Kunitz trypsin inhibitor 3 from Arabidopsis thaliana (Mouse-ear cress).